Here is a 162-residue protein sequence, read N- to C-terminus: 2-C-methyl-D-erythritol 2,4-cyclodiphosphate synthase (162 aa).

2 residues coordinate a divalent metal cation: aspartate 12 and histidine 14. 4-CDP-2-C-methyl-D-erythritol 2-phosphate is bound by residues 12–14 (DVH) and 38–39 (HS). Position 46 (histidine 46) interacts with a divalent metal cation. 4-CDP-2-C-methyl-D-erythritol 2-phosphate-binding positions include 60-62 (DIG), 65-69 (FPDTD), and arginine 146.

It belongs to the IspF family. Homotrimer. It depends on a divalent metal cation as a cofactor.

The catalysed reaction is 4-CDP-2-C-methyl-D-erythritol 2-phosphate = 2-C-methyl-D-erythritol 2,4-cyclic diphosphate + CMP. It participates in isoprenoid biosynthesis; isopentenyl diphosphate biosynthesis via DXP pathway; isopentenyl diphosphate from 1-deoxy-D-xylulose 5-phosphate: step 4/6. Functionally, involved in the biosynthesis of isopentenyl diphosphate (IPP) and dimethylallyl diphosphate (DMAPP), two major building blocks of isoprenoid compounds. Catalyzes the conversion of 4-diphosphocytidyl-2-C-methyl-D-erythritol 2-phosphate (CDP-ME2P) to 2-C-methyl-D-erythritol 2,4-cyclodiphosphate (ME-CPP) with a corresponding release of cytidine 5-monophosphate (CMP). This Bordetella avium (strain 197N) protein is 2-C-methyl-D-erythritol 2,4-cyclodiphosphate synthase.